Here is a 273-residue protein sequence, read N- to C-terminus: Putative pyruvate, phosphate dikinase regulatory protein (273 aa).

ADP is bound at residue 153 to 160; the sequence is GVSRTSKS.

It belongs to the pyruvate, phosphate/water dikinase regulatory protein family. PDRP subfamily.

It carries out the reaction N(tele)-phospho-L-histidyl/L-threonyl-[pyruvate, phosphate dikinase] + ADP = N(tele)-phospho-L-histidyl/O-phospho-L-threonyl-[pyruvate, phosphate dikinase] + AMP + H(+). It catalyses the reaction N(tele)-phospho-L-histidyl/O-phospho-L-threonyl-[pyruvate, phosphate dikinase] + phosphate + H(+) = N(tele)-phospho-L-histidyl/L-threonyl-[pyruvate, phosphate dikinase] + diphosphate. In terms of biological role, bifunctional serine/threonine kinase and phosphorylase involved in the regulation of the pyruvate, phosphate dikinase (PPDK) by catalyzing its phosphorylation/dephosphorylation. The chain is Putative pyruvate, phosphate dikinase regulatory protein from Ehrlichia chaffeensis (strain ATCC CRL-10679 / Arkansas).